Consider the following 215-residue polypeptide: UPF0056 membrane protein YhcE (215 aa).

6 consecutive transmembrane segments (helical) span residues 14 to 34 (FFIGLFALVNPVGIIPVFISM), 54 to 74 (VAIILWISLFLGDTILQLFGI), 81 to 101 (IAGGILVVTIAMSMISGKLGE), 120 to 140 (VVPLALPLMAGPGAISSTIVW), 147 to 167 (ISYLFGFFVAIALFALCCWGL), and 189 to 209 (IMGLLLMALGIEFIVTGIKGI).

It belongs to the UPF0056 (MarC) family.

It localises to the cell membrane. This is UPF0056 membrane protein YhcE (ychE) from Escherichia coli (strain K12).